The sequence spans 107 residues: Hydrogenase expression/formation protein HoxL (107 aa).

Belongs to the HupF/HypC family.

The polypeptide is Hydrogenase expression/formation protein HoxL (hoxL) (Cupriavidus necator (strain ATCC 17699 / DSM 428 / KCTC 22496 / NCIMB 10442 / H16 / Stanier 337) (Ralstonia eutropha)).